Consider the following 746-residue polypeptide: Teichoic acid poly(glycerol phosphate) polymerase (746 aa).

Residues 473 to 477 (WHGTP), Arg540, 573 to 574 (PT), 610 to 612 (RMH), 652 to 653 (SS), and Asp657 each bind CDP-glycerol.

The protein belongs to the CDP-glycerol glycerophosphotransferase family.

The protein resides in the cell membrane. It carries out the reaction 4-O-[(2R)-glycerylphospho]-N-acetyl-beta-D-mannosaminyl-(1-&gt;4)-N-acetyl-alpha-D-glucosaminyl di-trans,octa-cis-undecaprenyl diphosphate + n CDP-glycerol = 4-O-{[(2R)-1-glycerylphospho](n)-(2R)-1-glycerylphospho}-N-acetyl-beta-D-mannosaminyl-(1-&gt;4)-N-acetyl-alpha-D-glucosaminyl undecaprenyl diphosphate + n CMP + n H(+). Its pathway is cell wall biogenesis; poly(glycerol phosphate) teichoic acid biosynthesis. Its function is as follows. Responsible for the polymerization of the main chain of the major teichoic acid by sequential transfer of glycerol phosphate units from CDP-glycerol to the disaccharide linkage unit. Synthesizes polymers of approximately 35 glycerol phosphate units in length. This chain is Teichoic acid poly(glycerol phosphate) polymerase (tagF), found in Bacillus subtilis (strain 168).